The following is a 298-amino-acid chain: Glutamyl-Q tRNA(Asp) synthetase (298 aa).

L-glutamate is bound by residues 9–13 (RFAPS) and Glu-45. Positions 12–22 (PSPSGELHFGS) match the 'HIGH' region motif. Zn(2+)-binding residues include Cys-101, Cys-103, Tyr-115, and Cys-119. Positions 172 and 190 each coordinate L-glutamate. The 'KMSKS' region motif lies at 228–232 (KLSKQ). Lys-231 is a binding site for ATP.

The protein belongs to the class-I aminoacyl-tRNA synthetase family. GluQ subfamily. It depends on Zn(2+) as a cofactor.

Functionally, catalyzes the tRNA-independent activation of glutamate in presence of ATP and the subsequent transfer of glutamate onto a tRNA(Asp). Glutamate is transferred on the 2-amino-5-(4,5-dihydroxy-2-cyclopenten-1-yl) moiety of the queuosine in the wobble position of the QUC anticodon. The polypeptide is Glutamyl-Q tRNA(Asp) synthetase (Salmonella typhimurium (strain LT2 / SGSC1412 / ATCC 700720)).